A 58-amino-acid chain; its full sequence is Large ribosomal subunit protein eL24 (58 aa).

Residues cysteine 6, cysteine 9, cysteine 32, and cysteine 36 each contribute to the Zn(2+) site. The C4-type zinc-finger motif lies at 6-36; the sequence is CAFCGADILPGYGIMYVKTDGTTLRFCSRKC.

It belongs to the eukaryotic ribosomal protein eL24 family. In terms of assembly, part of the 50S ribosomal subunit. Forms a cluster with proteins L3 and L14. Zn(2+) is required as a cofactor.

Binds to the 23S rRNA. The chain is Large ribosomal subunit protein eL24 from Pyrobaculum islandicum (strain DSM 4184 / JCM 9189 / GEO3).